Consider the following 117-residue polypeptide: Aspartate 1-decarboxylase (117 aa).

Ser-25 (schiff-base intermediate with substrate; via pyruvic acid) is an active-site residue. Ser-25 is modified (pyruvic acid (Ser)). Residue Thr-57 coordinates substrate. Tyr-58 functions as the Proton donor in the catalytic mechanism. 72 to 74 (GAA) contributes to the substrate binding site.

The protein belongs to the PanD family. Heterooctamer of four alpha and four beta subunits. Pyruvate serves as cofactor. In terms of processing, is synthesized initially as an inactive proenzyme, which is activated by self-cleavage at a specific serine bond to produce a beta-subunit with a hydroxyl group at its C-terminus and an alpha-subunit with a pyruvoyl group at its N-terminus.

The protein localises to the cytoplasm. It catalyses the reaction L-aspartate + H(+) = beta-alanine + CO2. The protein operates within cofactor biosynthesis; (R)-pantothenate biosynthesis; beta-alanine from L-aspartate: step 1/1. Functionally, catalyzes the pyruvoyl-dependent decarboxylation of aspartate to produce beta-alanine. In Helicobacter pylori (strain ATCC 700392 / 26695) (Campylobacter pylori), this protein is Aspartate 1-decarboxylase.